The sequence spans 122 residues: Large ribosomal subunit protein uL14 (122 aa).

This sequence belongs to the universal ribosomal protein uL14 family. Part of the 50S ribosomal subunit. Forms a cluster with proteins L3 and L19. In the 70S ribosome, L14 and L19 interact and together make contacts with the 16S rRNA in bridges B5 and B8.

Its function is as follows. Binds to 23S rRNA. Forms part of two intersubunit bridges in the 70S ribosome. The protein is Large ribosomal subunit protein uL14 of Clostridioides difficile (strain 630) (Peptoclostridium difficile).